The following is a 33-amino-acid chain: Actin (33 aa).

The protein belongs to the actin family.

It localises to the cytoplasm. It is found in the cytoskeleton. It carries out the reaction ATP + H2O = ADP + phosphate + H(+). Its function is as follows. Actins are highly conserved proteins that are involved in various types of cell motility and are ubiquitously expressed in all eukaryotic cells. The polypeptide is Actin (Dictyocaulus viviparus (Bovine lungworm)).